The primary structure comprises 46 residues: Photosystem II reaction center protein K (46 aa).

A propeptide spanning residues 1–9 is cleaved from the precursor; the sequence is MLILLNTFA. Residues 25–45 form a helical membrane-spanning segment; the sequence is LPLIPLFFFLLVFVWQAAVGF.

The protein belongs to the PsbK family. As to quaternary structure, PSII is composed of 1 copy each of membrane proteins PsbA, PsbB, PsbC, PsbD, PsbE, PsbF, PsbH, PsbI, PsbJ, PsbK, PsbL, PsbM, PsbT, PsbX, PsbY, Psb30/Ycf12, peripheral proteins PsbO, CyanoQ (PsbQ), PsbU, PsbV and a large number of cofactors. It forms dimeric complexes.

Its subcellular location is the cellular thylakoid membrane. One of the components of the core complex of photosystem II (PSII). PSII is a light-driven water:plastoquinone oxidoreductase that uses light energy to abstract electrons from H(2)O, generating O(2) and a proton gradient subsequently used for ATP formation. It consists of a core antenna complex that captures photons, and an electron transfer chain that converts photonic excitation into a charge separation. This is Photosystem II reaction center protein K from Prochlorococcus marinus (strain MIT 9215).